A 415-amino-acid chain; its full sequence is Gamma-glutamyl phosphate reductase (415 aa).

The protein belongs to the gamma-glutamyl phosphate reductase family.

Its subcellular location is the cytoplasm. It catalyses the reaction L-glutamate 5-semialdehyde + phosphate + NADP(+) = L-glutamyl 5-phosphate + NADPH + H(+). It functions in the pathway amino-acid biosynthesis; L-proline biosynthesis; L-glutamate 5-semialdehyde from L-glutamate: step 2/2. In terms of biological role, catalyzes the NADPH-dependent reduction of L-glutamate 5-phosphate into L-glutamate 5-semialdehyde and phosphate. The product spontaneously undergoes cyclization to form 1-pyrroline-5-carboxylate. The polypeptide is Gamma-glutamyl phosphate reductase (Salmonella dublin (strain CT_02021853)).